Reading from the N-terminus, the 208-residue chain is Uridine kinase (208 aa).

ATP is bound at residue 12-19 (GGSGGGKT).

The protein belongs to the uridine kinase family.

Its subcellular location is the cytoplasm. The catalysed reaction is uridine + ATP = UMP + ADP + H(+). The enzyme catalyses cytidine + ATP = CMP + ADP + H(+). The protein operates within pyrimidine metabolism; CTP biosynthesis via salvage pathway; CTP from cytidine: step 1/3. It participates in pyrimidine metabolism; UMP biosynthesis via salvage pathway; UMP from uridine: step 1/1. This Streptococcus equi subsp. equi (strain 4047) protein is Uridine kinase.